A 103-amino-acid chain; its full sequence is Histone H4 (103 aa).

Residues 1–14 are compositionally biased toward gly residues; the sequence is MSGRGKGGKGLGKG. Residues 1 to 20 are disordered; the sequence is MSGRGKGGKGLGKGGAKRHR. Residue S2 is modified to N-acetylserine. 2 positions are modified to N6-acetyl-N6-methyllysine; alternate: K6 and K13. K17 carries the N6-acetyllysine modification. Residues 17 to 21 mediate DNA binding; it reads KRHRK. K21 bears the N6-methyllysine mark.

Belongs to the histone H4 family. In terms of assembly, the nucleosome is a histone octamer containing two molecules each of H2A, H2B, H3 and H4 assembled in one H3-H4 heterotetramer and two H2A-H2B heterodimers. The octamer wraps approximately 147 bp of DNA.

It localises to the nucleus. It is found in the chromosome. In terms of biological role, core component of nucleosome. Nucleosomes wrap and compact DNA into chromatin, limiting DNA accessibility to the cellular machineries which require DNA as a template. Histones thereby play a central role in transcription regulation, DNA repair, DNA replication and chromosomal stability. DNA accessibility is regulated via a complex set of post-translational modifications of histones, also called histone code, and nucleosome remodeling. The chain is Histone H4 from Holothuria tubulosa (Tubular sea cucumber).